The primary structure comprises 146 residues: uncharacterized protein (146 aa).

This is an uncharacterized protein from Escherichia coli (strain K12).